We begin with the raw amino-acid sequence, 317 residues long: uncharacterized protein (317 aa).

To A.aeolicus AA11 and AA34.

This is an uncharacterized protein from Aquifex aeolicus (strain VF5).